Here is a 148-residue protein sequence, read N- to C-terminus: Endoribonuclease YbeY (148 aa).

Residues histidine 105, histidine 109, and aspartate 115 each contribute to the Zn(2+) site.

It belongs to the endoribonuclease YbeY family. Zn(2+) serves as cofactor.

Its subcellular location is the cytoplasm. Functionally, single strand-specific metallo-endoribonuclease involved in late-stage 70S ribosome quality control and in maturation of the 3' terminus of the 16S rRNA. The chain is Endoribonuclease YbeY from Chlorobium phaeovibrioides (strain DSM 265 / 1930) (Prosthecochloris vibrioformis (strain DSM 265)).